We begin with the raw amino-acid sequence, 673 residues long: MEIEQRRIMKREGEEEEDNNQLSLQEEEPDTEEEMSGRTIEPWTKQITVRGVFVSIVIGVVFSVIAQKLNLTTGIVPNLNSSAALLAFVFVQTWTKILKKSGFVAKPFTRQENTMIQTSAVACYGIAVGGGFASYLLGLNHKTYVLSGVNLEGNSPKSVKEPGLGWMTAYLFVVCFIGLFVLIPLRKVMIVDLKLTYPSGLATAVLINGFHTQGDAQAKKQVRGFMKYFSFSFLWGFFQWFFSGIEDCGFAQFPTFGLKAWKQTFFFDFSMTFVGAGMICSHLVNLSLLLGAILSYGLMWPLLDKLKGSWFPDNLDEHNMKSIYGYKVFLSVALILGDGLYTFVKILFVTIANVNARLKNKPNDLDDVGHKKQRKDLKEDENFLRDKIPMWFAVSGYLTFAAVSTVVVPLIFPQLKWYYVIVAYIFAPSLAFCNAYGAGLTDINMAYNYGKIGLFVIAAVTGRENGVVAGLAGCGLIKSVVSVSCILMQDFKTAHYTMTSPKAMFASQMIGTVVGCIVTPLSFFLFYKAFDIGNPNGEFKAPYALIYRNMAILGVQGFSALPLHCLQMCYGFFGFAVLVNVVRDLTPAKIGRFMPLPTAMAVPFLVGAYFAIDMCVGTLIVFVWEKMNRKKAEFMVPAVASGLICGEGLWTLPAAVLALAGVKPPICMKFLAS.

Residues methionine 1–glycine 13 are compositionally biased toward basic and acidic residues. A disordered region spans residues methionine 1 to threonine 39. Acidic residues predominate over residues glutamate 14 to glutamate 34. 16 helical membrane-spanning segments follow: residues glutamine 46–alanine 66, leucine 71–valine 91, serine 119–leucine 139, glycine 163–isoleucine 183, phenylalanine 225–isoleucine 245, alanine 260–cysteine 280, leucine 283–leucine 303, valine 328–phenylalanine 348, phenylalanine 392–phenylalanine 412, valine 420–leucine 440, aspartate 442–glycine 462, valine 467–leucine 487, isoleucine 510–phenylalanine 530, phenylalanine 558–leucine 578, phenylalanine 604–tryptophan 624, and glycine 642–valine 662.

It belongs to the YSL (TC 2.A.67.2) family. As to expression, low levels of expression in leaves and shoots, but not detected in roots. Restricted to the vasculature, in the xylem parenchyma surrounding xylem tubes. Expressed in pollen grains, in the vasculature of petals and sepals, in the carpel veins, in the style underneath the stigmatic papillae, in the vascular tissue of the funiculus and in the chalazal endosperm.

It localises to the membrane. Functionally, involved in iron loading of the seeds. Acts probably as a transporter of iron- and metal-nicotianamine chelates. The chain is Metal-nicotianamine transporter YSL1 (YSL1) from Arabidopsis thaliana (Mouse-ear cress).